A 652-amino-acid chain; its full sequence is Zinc finger protein 432 (652 aa).

The region spanning 8 to 79 (LTLEDVTVEF…EDERHSRICP (72 aa)) is the KRAB domain. 3'-nitrotyrosine is present on Y41. 2 positions are modified to ADP-ribosylserine: S139 and S164. C2H2-type zinc fingers lie at residues 205-227 (HVCS…ERVH), 233-255 (YGCT…QRIH), 261-283 (FICS…QRTH), 289-311 (YICN…QRNH), 317-339 (YICS…QRTH), 345-367 (YICS…QRNH), 373-395 (YICN…QRTH), 401-423 (YICS…QRNH), 429-451 (YLCS…QRTH), 457-479 (YTCS…QRTH), 485-507 (YRCS…QRTH), 513-535 (YICN…QRTH), 541-563 (FMCS…QQIH), 567-591 (KSCI…KQVH), 597-619 (YGCN…QRTH), and 625-647 (FVCS…QRTH). The residue at position 246 (S246) is an ADP-ribosylserine. Residue S330 is modified to ADP-ribosylserine. ADP-ribosylserine is present on S414.

This sequence belongs to the krueppel C2H2-type zinc-finger protein family. In terms of assembly, interacts with PARP1 and several chromatin remodeling proteins; the interaction with PARP1 reshapes ZNF432 interacting proteins. Interacts with TRIM28; the interaction is independent of PARP1.

The protein localises to the nucleus. Its function is as follows. Homologous recombination repressor that functions as a poly(ADP-ribose) (PAR) reader regulating DNA damage response and PARP inhibition. Once recruited to DNA lesions via DNA-, in a PAR-dependent mechanism, stimulates PARP1 activity. Binds preferentially ssDNA and inhibits EXO1-mediated resection, probably through a PAR-independent DNA-binding mechanism. In Homo sapiens (Human), this protein is Zinc finger protein 432.